Here is a 1430-residue protein sequence, read N- to C-terminus: Gag-Pol polyprotein (1430 aa).

Residue Gly2 is the site of N-myristoyl glycine; by host attachment. The tract at residues 7-31 is interaction with Gp41; sequence VLSGGKLDAWEKIRLKPGGKKRYRL. The tract at residues 8 to 43 is interaction with host CALM1; sequence LSGGKLDAWEKIRLKPGGKKRYRLKHLVWASRELER. The interval 12–19 is interaction with host AP3D1; that stretch reads KLDAWEKI. Residues 14–33 are interaction with membrane phosphatidylinositol 4,5-bisphosphate and RNA; that stretch reads DAWEKIRLKPGGKKRYRLKH. Positions 16 to 22 match the Nuclear export signal motif; the sequence is WEKIRLK. The Nuclear localization signal signature appears at 26-32; the sequence is KKRYRLK. An interaction with membrane phosphatidylinositol 4,5-bisphosphate region spans residues 73–77; the sequence is EELKS. A disordered region spans residues 105 to 124; sequence QEEQDKSQQKEQQKAADKEV. Tyr128 carries the post-translational modification Phosphotyrosine; by host. The segment at 185–223 is interaction with human PPIA/CYPA and NUP153; it reads NTVGGHQAAMQMLKDTINEEAAEWDRLHPVHAGPIPPGQ. Residues 273 to 359 are dimerization/Multimerization of capsid protein p24; the sequence is YSPVSILDIK…GGPGHKARIL (87 aa). 2 CCHC-type zinc fingers span residues 385–402 and 406–423; these read VKCFNCGKEGHIARNCRA and KGCWKCGKEGHQMKDCTE. Residues 440 to 479 are disordered; it reads ARKFSSEQTRANSPASRELRVRRGDNPLPEAGAERRGTGS. The segment covering 445 to 454 has biased composition (polar residues); the sequence is SEQTRANSPA. The dimerization of protease stretch occupies residues 484–488; that stretch reads PQITL. The Peptidase A2 domain maps to 503–572; that stretch reads REALLDTGAD…TPVNIIGRNL (70 aa). The active-site For protease activity; shared with dimeric partner is the Asp508. Dimerization of protease stretches follow at residues 532 to 538 and 571 to 583; these read GIGGFIK and NLLTQLGCTLNFP. The Reverse transcriptase domain occupies 626–816; that stretch reads EGKISKIGPE…PPFLWMGYEL (191 aa). Positions 692, 767, and 768 each coordinate Mg(2+). The RT 'primer grip' stretch occupies residues 809-817; it reads FLWMGYELH. Positions 980 to 996 match the Tryptophan repeat motif motif; that stretch reads WEIWWTEYWQATWIPEW. The RNase H type-1 domain occupies 1016–1139; that stretch reads IAGAETFYVD…VDKLVSSGIR (124 aa). Mg(2+) is bound by residues Asp1025, Glu1060, Asp1080, and Asp1131. An Integrase-type zinc finger spans residues 1145 to 1186; that stretch reads DGIDKAQEEHEKYHNNWRAMASDFNLPPVVAKEIVANCDKCQ. Zn(2+) contacts are provided by His1154, His1158, Cys1182, and Cys1185. Residues 1196–1346 form the Integrase catalytic domain; that stretch reads VDCSPGIWQL…SAGERIIDII (151 aa). Mg(2+) contacts are provided by Asp1206, Asp1258, and Glu1294. A DNA-binding region (integrase-type) is located at residues 1365 to 1412; sequence FRVYFRDSRDPVWKGPAKLLWKGEGAVVIQDNNEIKVVPRRKAKIIRD.

Homotrimer; further assembles as hexamers of trimers. Interacts with gp41 (via C-terminus). Interacts with host CALM1; this interaction induces a conformational change in the Matrix protein, triggering exposure of the myristate group. Interacts with host AP3D1; this interaction allows the polyprotein trafficking to multivesicular bodies during virus assembly. Part of the pre-integration complex (PIC) which is composed of viral genome, matrix protein, Vpr and integrase. In terms of assembly, homodimer; the homodimer further multimerizes as homohexamers or homopentamers. Interacts with human PPIA/CYPA; This interaction stabilizes the capsid. Interacts with human NUP153. Interacts with host PDZD8; this interaction stabilizes the capsid. Interacts with monkey TRIM5; this interaction destabilizes the capsid. As to quaternary structure, homodimer, whose active site consists of two apposed aspartic acid residues. Heterodimer of p66 RT and p51 RT (RT p66/p51). Heterodimerization of RT is essential for DNA polymerase activity. The overall folding of the subdomains is similar in p66 RT and p51 RT but the spatial arrangements of the subdomains are dramatically different. In terms of assembly, homotetramer; may further associate as a homohexadecamer. Part of the pre-integration complex (PIC) which is composed of viral genome, matrix protein, Vpr and integrase. Interacts with human SMARCB1/INI1 and human PSIP1/LEDGF isoform 1. Interacts with human KPNA3; this interaction might play a role in nuclear import of the pre-integration complex. Interacts with human NUP153; this interaction might play a role in nuclear import of the pre-integration complex. It depends on Mg(2+) as a cofactor. Specific enzymatic cleavages by the viral protease yield mature proteins. The protease is released by autocatalytic cleavage. The polyprotein is cleaved during and after budding, this process is termed maturation. Proteolytic cleavage of p66 RT removes the RNase H domain to yield the p51 RT subunit. Nucleocapsid protein p7 might be further cleaved after virus entry. Post-translationally, tyrosine phosphorylated presumably in the virion by a host kinase. Phosphorylation is apparently not a major regulator of membrane association. In terms of processing, phosphorylated possibly by host MAPK1; this phosphorylation is necessary for Pin1-mediated virion uncoating. Methylated by host PRMT6, impairing its function by reducing RNA annealing and the initiation of reverse transcription.

The protein localises to the host cell membrane. It localises to the host endosome. It is found in the host multivesicular body. Its subcellular location is the virion membrane. The protein resides in the host nucleus. The protein localises to the host cytoplasm. It localises to the virion. The enzyme catalyses Specific for a P1 residue that is hydrophobic, and P1' variable, but often Pro.. It carries out the reaction Endohydrolysis of RNA in RNA/DNA hybrids. Three different cleavage modes: 1. sequence-specific internal cleavage of RNA. Human immunodeficiency virus type 1 and Moloney murine leukemia virus enzymes prefer to cleave the RNA strand one nucleotide away from the RNA-DNA junction. 2. RNA 5'-end directed cleavage 13-19 nucleotides from the RNA end. 3. DNA 3'-end directed cleavage 15-20 nucleotides away from the primer terminus.. The catalysed reaction is 3'-end directed exonucleolytic cleavage of viral RNA-DNA hybrid.. It catalyses the reaction DNA(n) + a 2'-deoxyribonucleoside 5'-triphosphate = DNA(n+1) + diphosphate. With respect to regulation, protease: The viral protease is inhibited by many synthetic protease inhibitors (PIs), such as amprenavir, atazanavir, indinavir, loprinavir, nelfinavir, ritonavir and saquinavir. Use of protease inhibitors in tritherapy regimens permit more ambitious therapeutic strategies. Reverse transcriptase/ribonuclease H: RT can be inhibited either by nucleoside RT inhibitors (NRTIs) or by non nucleoside RT inhibitors (NNRTIs). NRTIs act as chain terminators, whereas NNRTIs inhibit DNA polymerization by binding a small hydrophobic pocket near the RT active site and inducing an allosteric change in this region. Classical NRTIs are abacavir, adefovir (PMEA), didanosine (ddI), lamivudine (3TC), stavudine (d4T), tenofovir (PMPA), zalcitabine (ddC), and zidovudine (AZT). Classical NNRTIs are atevirdine (BHAP U-87201E), delavirdine, efavirenz (DMP-266), emivirine (I-EBU), and nevirapine (BI-RG-587). The tritherapies used as a basic effective treatment of AIDS associate two NRTIs and one NNRTI. Mediates, with Gag polyprotein, the essential events in virion assembly, including binding the plasma membrane, making the protein-protein interactions necessary to create spherical particles, recruiting the viral Env proteins, and packaging the genomic RNA via direct interactions with the RNA packaging sequence (Psi). Gag-Pol polyprotein may regulate its own translation, by the binding genomic RNA in the 5'-UTR. At low concentration, the polyprotein would promote translation, whereas at high concentration, the polyprotein would encapsidate genomic RNA and then shut off translation. In terms of biological role, targets the polyprotein to the plasma membrane via a multipartite membrane-binding signal, that includes its myristoylated N-terminus. Matrix protein is part of the pre-integration complex. Implicated in the release from host cell mediated by Vpu. Binds to RNA. Functionally, forms the conical core that encapsulates the genomic RNA-nucleocapsid complex in the virion. Most core are conical, with only 7% tubular. The core is constituted by capsid protein hexamer subunits. The core is disassembled soon after virion entry. Host restriction factors such as TRIM5-alpha or TRIMCyp bind retroviral capsids and cause premature capsid disassembly, leading to blocks in reverse transcription. Capsid restriction by TRIM5 is one of the factors which restricts HIV-1 to the human species. Host PIN1 apparently facilitates the virion uncoating. On the other hand, interactions with PDZD8 or CYPA stabilize the capsid. Its function is as follows. Encapsulates and protects viral dimeric unspliced genomic RNA (gRNA). Binds these RNAs through its zinc fingers. Acts as a nucleic acid chaperone which is involved in rearangement of nucleic acid secondary structure during gRNA retrotranscription. Also facilitates template switch leading to recombination. As part of the polyprotein, participates in gRNA dimerization, packaging, tRNA incorporation and virion assembly. Aspartyl protease that mediates proteolytic cleavages of Gag and Gag-Pol polyproteins during or shortly after the release of the virion from the plasma membrane. Cleavages take place as an ordered, step-wise cascade to yield mature proteins. This process is called maturation. Displays maximal activity during the budding process just prior to particle release from the cell. Also cleaves Nef and Vif, probably concomitantly with viral structural proteins on maturation of virus particles. Hydrolyzes host EIF4GI and PABP1 in order to shut off the capped cellular mRNA translation. The resulting inhibition of cellular protein synthesis serves to ensure maximal viral gene expression and to evade host immune response. Also mediates cleavage of host YTHDF3. Mediates cleavage of host CARD8, thereby activating the CARD8 inflammasome, leading to the clearance of latent HIV-1 in patient CD4(+) T-cells after viral reactivation; in contrast, HIV-1 can evade CARD8-sensing when its protease remains inactive in infected cells prior to viral budding. In terms of biological role, multifunctional enzyme that converts the viral RNA genome into dsDNA in the cytoplasm, shortly after virus entry into the cell. This enzyme displays a DNA polymerase activity that can copy either DNA or RNA templates, and a ribonuclease H (RNase H) activity that cleaves the RNA strand of RNA-DNA heteroduplexes in a partially processive 3' to 5' endonucleasic mode. Conversion of viral genomic RNA into dsDNA requires many steps. A tRNA(3)-Lys binds to the primer-binding site (PBS) situated at the 5'-end of the viral RNA. RT uses the 3' end of the tRNA primer to perform a short round of RNA-dependent minus-strand DNA synthesis. The reading proceeds through the U5 region and ends after the repeated (R) region which is present at both ends of viral RNA. The portion of the RNA-DNA heteroduplex is digested by the RNase H, resulting in a ssDNA product attached to the tRNA primer. This ssDNA/tRNA hybridizes with the identical R region situated at the 3' end of viral RNA. This template exchange, known as minus-strand DNA strong stop transfer, can be either intra- or intermolecular. RT uses the 3' end of this newly synthesized short ssDNA to perform the RNA-dependent minus-strand DNA synthesis of the whole template. RNase H digests the RNA template except for two polypurine tracts (PPTs) situated at the 5'-end and near the center of the genome. It is not clear if both polymerase and RNase H activities are simultaneous. RNase H probably can proceed both in a polymerase-dependent (RNA cut into small fragments by the same RT performing DNA synthesis) and a polymerase-independent mode (cleavage of remaining RNA fragments by free RTs). Secondly, RT performs DNA-directed plus-strand DNA synthesis using the PPTs that have not been removed by RNase H as primers. PPTs and tRNA primers are then removed by RNase H. The 3' and 5' ssDNA PBS regions hybridize to form a circular dsDNA intermediate. Strand displacement synthesis by RT to the PBS and PPT ends produces a blunt ended, linear dsDNA copy of the viral genome that includes long terminal repeats (LTRs) at both ends. Functionally, catalyzes viral DNA integration into the host chromosome, by performing a series of DNA cutting and joining reactions. This enzyme activity takes place after virion entry into a cell and reverse transcription of the RNA genome in dsDNA. The first step in the integration process is 3' processing. This step requires a complex comprising the viral genome, matrix protein, Vpr and integrase. This complex is called the pre-integration complex (PIC). The integrase protein removes 2 nucleotides from each 3' end of the viral DNA, leaving recessed CA OH's at the 3' ends. In the second step, the PIC enters cell nucleus. This process is mediated through integrase and Vpr proteins, and allows the virus to infect a non dividing cell. This ability to enter the nucleus is specific of lentiviruses, other retroviruses cannot and rely on cell division to access cell chromosomes. In the third step, termed strand transfer, the integrase protein joins the previously processed 3' ends to the 5' ends of strands of target cellular DNA at the site of integration. The 5'-ends are produced by integrase-catalyzed staggered cuts, 5 bp apart. A Y-shaped, gapped, recombination intermediate results, with the 5'-ends of the viral DNA strands and the 3' ends of target DNA strands remaining unjoined, flanking a gap of 5 bp. The last step is viral DNA integration into host chromosome. This involves host DNA repair synthesis in which the 5 bp gaps between the unjoined strands are filled in and then ligated. Since this process occurs at both cuts flanking the HIV genome, a 5 bp duplication of host DNA is produced at the ends of HIV-1 integration. Alternatively, Integrase may catalyze the excision of viral DNA just after strand transfer, this is termed disintegration. The polypeptide is Gag-Pol polyprotein (gag-pol) (Human immunodeficiency virus type 1 group M subtype F2 (isolate MP255) (HIV-1)).